Here is a 393-residue protein sequence, read N- to C-terminus: Pre-mRNA-splicing regulator WTAP (393 aa).

The interval 240 to 393 (QQQIQTSGNR…SSVNVQGSVL (154 aa)) is disordered. The span at 254–267 (ESKDEGETSGKDCG) shows a compositional bias: basic and acidic residues. Positions 272-286 (GPSNGGSSHQRTHSS) are enriched in polar residues. A compositionally biased stretch (basic and acidic residues) spans 310-319 (LPNHSEERTS). Positions 320–353 (RGGSSYMNQLSTGYESVDSPTGSENSLTHQSNDT) are enriched in polar residues. Basic and acidic residues predominate over residues 354–365 (DSNHDSQEEKPV). Residues 369-393 (GNRTVSSRHLQNGLDSSVNVQGSVL) are compositionally biased toward polar residues.

This sequence belongs to the fl(2)d family. In terms of assembly, component of the WMM complex, a N6-methyltransferase complex composed of a catalytic subcomplex, named MAC, and of an associated subcomplex, named MACOM. Component of the MACOM subcomplex.

The protein localises to the nucleus speckle. Its subcellular location is the nucleus. It localises to the nucleoplasm. In terms of biological role, associated component of the WMM complex, a complex that mediates N6-methyladenosine (m6A) methylation of RNAs, a modification that plays a role in the efficiency of mRNA splicing and RNA processing. This is Pre-mRNA-splicing regulator WTAP from Xenopus tropicalis (Western clawed frog).